Consider the following 553-residue polypeptide: T-complex protein 1 subunit eta (553 aa).

Gly-41 is an ADP binding site. Gly-41 serves as a coordination point for ATP. A Mg(2+)-binding site is contributed by Asp-92. ADP contacts are provided by Gly-93, Thr-94, Thr-95, Ser-96, Ser-164, and Ser-165. Gly-93 serves as a coordination point for ATP. Residue Ser-96 coordinates ATP. ATP contacts are provided by Arg-398 and Gly-409. ADP is bound by residues Gly-409, Glu-494, and Arg-499. Arg-499 is a binding site for ATP. The disordered stretch occupies residues 523–553 (PRSTVDAPPGGRGRGRGQTPQPLRPRSVALS). Positions 539–553 (GQTPQPLRPRSVALS) are enriched in low complexity.

Component of the chaperonin-containing T-complex (TRiC), a hexadecamer composed of two identical back-to-back stacked rings enclosing a protein folding chamber. Each ring is made up of eight different subunits: TCP1/CCT1, CCT2, CCT3, CCT4, CCT5, CCT6A/CCT6, CCT7, CCT8.

It localises to the cytoplasm. It carries out the reaction ATP + H2O = ADP + phosphate + H(+). Its function is as follows. Component of the chaperonin-containing T-complex (TRiC), a molecular chaperone complex that assists the folding of actin, tubulin and other proteins upon ATP hydrolysis. The sequence is that of T-complex protein 1 subunit eta from Gallus gallus (Chicken).